The following is a 578-amino-acid chain: Proline--tRNA ligase (578 aa).

It belongs to the class-II aminoacyl-tRNA synthetase family. ProS type 1 subfamily. As to quaternary structure, homodimer.

Its subcellular location is the cytoplasm. The enzyme catalyses tRNA(Pro) + L-proline + ATP = L-prolyl-tRNA(Pro) + AMP + diphosphate. Functionally, catalyzes the attachment of proline to tRNA(Pro) in a two-step reaction: proline is first activated by ATP to form Pro-AMP and then transferred to the acceptor end of tRNA(Pro). As ProRS can inadvertently accommodate and process non-cognate amino acids such as alanine and cysteine, to avoid such errors it has two additional distinct editing activities against alanine. One activity is designated as 'pretransfer' editing and involves the tRNA(Pro)-independent hydrolysis of activated Ala-AMP. The other activity is designated 'posttransfer' editing and involves deacylation of mischarged Ala-tRNA(Pro). The misacylated Cys-tRNA(Pro) is not edited by ProRS. This Paraburkholderia xenovorans (strain LB400) protein is Proline--tRNA ligase.